The following is a 647-amino-acid chain: DNA mismatch repair protein MutL (647 aa).

The segment at 346–378 is disordered; that stretch reads QTVHAPRSAAPRVSERASDEPPAWQPSPTSGEP.

Belongs to the DNA mismatch repair MutL/HexB family.

This protein is involved in the repair of mismatches in DNA. It is required for dam-dependent methyl-directed DNA mismatch repair. May act as a 'molecular matchmaker', a protein that promotes the formation of a stable complex between two or more DNA-binding proteins in an ATP-dependent manner without itself being part of a final effector complex. The protein is DNA mismatch repair protein MutL of Limosilactobacillus fermentum (strain NBRC 3956 / LMG 18251) (Lactobacillus fermentum).